We begin with the raw amino-acid sequence, 120 residues long: Small ribosomal subunit protein uS13 (120 aa).

Residues 97–120 (PVRGQRTKTNARTRKGKKKTVGAK) form a disordered region.

It belongs to the universal ribosomal protein uS13 family. Part of the 30S ribosomal subunit. Forms a loose heterodimer with protein S19. Forms two bridges to the 50S subunit in the 70S ribosome.

Located at the top of the head of the 30S subunit, it contacts several helices of the 16S rRNA. In the 70S ribosome it contacts the 23S rRNA (bridge B1a) and protein L5 of the 50S subunit (bridge B1b), connecting the 2 subunits; these bridges are implicated in subunit movement. Contacts the tRNAs in the A and P-sites. This is Small ribosomal subunit protein uS13 from Nitratiruptor sp. (strain SB155-2).